A 117-amino-acid polypeptide reads, in one-letter code: Large ribosomal subunit protein uL22 (117 aa).

This sequence belongs to the universal ribosomal protein uL22 family. As to quaternary structure, part of the 50S ribosomal subunit.

In terms of biological role, this protein binds specifically to 23S rRNA; its binding is stimulated by other ribosomal proteins, e.g. L4, L17, and L20. It is important during the early stages of 50S assembly. It makes multiple contacts with different domains of the 23S rRNA in the assembled 50S subunit and ribosome. Its function is as follows. The globular domain of the protein is located near the polypeptide exit tunnel on the outside of the subunit, while an extended beta-hairpin is found that lines the wall of the exit tunnel in the center of the 70S ribosome. This Staphylococcus aureus (strain USA300) protein is Large ribosomal subunit protein uL22.